Reading from the N-terminus, the 57-residue chain is COP9 signalosome complex subunit 9 (57 aa).

Belongs to the CSN9 family. In terms of assembly, component of the CSN complex, probably composed of cops1, cops2, cops3, cops4, cops5, cops6, cops7, cops8 and cops9.

Its subcellular location is the nucleus. It is found in the cytoplasm. The protein resides in the nucleoplasm. Component of the COP9 signalosome complex (CSN), a complex involved in various cellular and developmental processes. The CSN complex is an essential regulator of the ubiquitin (Ubl) conjugation pathway by mediating the deneddylation of the cullin subunits of SCF-type E3 ligase complexes, leading to decrease the Ubl ligase activity. May play a role in cell proliferation. The sequence is that of COP9 signalosome complex subunit 9 from Xenopus laevis (African clawed frog).